Here is a 326-residue protein sequence, read N- to C-terminus: Malate dehydrogenase (326 aa).

11-17 serves as a coordination point for NAD(+); the sequence is GAAGQIG. Residues Arg92 and Arg98 each contribute to the substrate site. NAD(+) contacts are provided by residues Asn105, Gln112, and 129–131; that span reads VGN. 2 residues coordinate substrate: Asn131 and Arg162. The Proton acceptor role is filled by His187.

Belongs to the LDH/MDH superfamily. MDH type 2 family.

It catalyses the reaction (S)-malate + NAD(+) = oxaloacetate + NADH + H(+). In terms of biological role, catalyzes the reversible oxidation of malate to oxaloacetate. The sequence is that of Malate dehydrogenase from Leptospira borgpetersenii serovar Hardjo-bovis (strain JB197).